The chain runs to 898 residues: Serine/threonine-protein kinase TAO3 (898 aa).

One can recognise a Protein kinase domain in the interval 24-277; it reads FIGLHEIGHG…SAELLRHDFV (254 aa). ATP-binding positions include 30 to 38 and Lys-53; that span reads IGHGSFGAV. Asp-147 functions as the Proton acceptor in the catalytic mechanism. 2 disordered regions span residues 316–362 and 405–425; these read TRNG…SQSS and DEAGHGDPRPEPRPTQSVQSQ. Ser-324 is subject to Phosphoserine; by ATM. Phosphoserine is present on residues Ser-331, Ser-343, Ser-346, and Ser-349. Positions 334-351 are enriched in polar residues; the sequence is GTSLNREMDSLGSNHSIP. Low complexity predominate over residues 352-362; sequence SMSVSTGSQSS. Residue Thr-357 is modified to Phosphothreonine. At Ser-359 the chain carries Phosphoserine. Basic and acidic residues predominate over residues 405–416; the sequence is DEAGHGDPRPEP. Residue Ser-442 is modified to Phosphoserine. Coiled-coil stretches lie at residues 452-502, 548-649, and 754-879; these read EQEN…THAN, FLES…HAML, and LKTL…DMES. The segment at 565 to 596 is disordered; it reads EEMNEDHSTPKKEKQERISKHKENLQHTQAEE. Lys-830 is modified (N6-acetyllysine).

The protein belongs to the protein kinase superfamily. STE Ser/Thr protein kinase family. STE20 subfamily. Self-associates. Interacts with ERN1 and TRAF2. Interaction with TRAF2 is facilitated under ER stress conditions, such as treatment with tunicamycin, and may promote TRAF2 phosphorylation. Interacts (via N-terminus) with STK25; the interaction promotes STK25 abundance at the level of protein expression and/or stability. As to quaternary structure, (Microbial infection) Interacts with herpes simplex virus 1 UL37 protein. In terms of processing, autophosphorylated. Phosphorylation at Ser-324 by ATM following DNA damage is required for activation of the p38/MAPK14 stress-activated MAPK cascade. Phosphorylated at Ser-324 and on Tyr residues during T cell activation. Phosphorylated by LRRK2. In terms of tissue distribution, ubiquitously expressed at a low level, and highly expressed in peripheral blood leukocytes (PBLs), thymus, spleen, kidney, skeletal muscle, heart and liver.

It is found in the cytoplasm. It localises to the cell membrane. The protein resides in the membrane raft. The protein localises to the lipid droplet. The catalysed reaction is L-seryl-[protein] + ATP = O-phospho-L-seryl-[protein] + ADP + H(+). It carries out the reaction L-threonyl-[protein] + ATP = O-phospho-L-threonyl-[protein] + ADP + H(+). Serine/threonine-protein kinase that acts as a regulator of the p38/MAPK14 stress-activated MAPK cascade and of the MAPK8/JNK cascade. In response to DNA damage, involved in the G2/M transition DNA damage checkpoint by activating the p38/MAPK14 stress-activated MAPK cascade, probably by mediating phosphorylation of upstream MAP2K3 and MAP2K6 kinases. Inhibits basal activity of the MAPK8/JNK cascade and diminishes its activation in response to epidermal growth factor (EGF). Positively regulates canonical T cell receptor (TCR) signaling by preventing early PTPN6/SHP1-mediated inactivation of LCK, ensuring sustained TCR signaling that is required for optimal activation and differentiation of T cells. Phosphorylates PTPN6/SHP1 on 'Thr-394', leading to its polyubiquitination and subsequent proteasomal degradation. Required for cell surface expression of metalloprotease ADAM10 on type 1 transitional B cells which is necessary for their NOTCH-mediated development into marginal zone B cells. Also required for the NOTCH-mediated terminal differentiation of splenic conventional type 2 dendritic cells. Positively regulates osteoblast differentiation by acting as an upstream activator of the JNK pathway. Promotes JNK signaling in hepatocytes and positively regulates hepatocyte lipid storage by inhibiting beta-oxidation and triacylglycerol secretion while enhancing lipid synthesis. Restricts age-associated inflammation by negatively regulating differentiation of macrophages and their production of pro-inflammatory cytokines. Plays a role in negatively regulating the abundance of regulatory T cells in white adipose tissue. The sequence is that of Serine/threonine-protein kinase TAO3 (TAOK3) from Homo sapiens (Human).